The primary structure comprises 394 residues: RHOMBOID-like protein 4 (394 aa).

The segment at 1-51 is disordered; the sequence is MGEKDSETAPIWGKTRERERSNNNNIQPMDLESSSSVSGQQRSLTQSRSSY. The segment covering 39–49 has biased composition (polar residues); the sequence is GQQRSLTQSRS. A run of 7 helical transmembrane segments spans residues 64–84, 147–167, 175–195, 201–221, 231–251, 254–274, and 300–320; these read WFPW…VITM, WLHG…FIGI, FIRI…LSAL, ISVG…SEIF, VVTI…GVLP, DNFA…VLLI, and ILWT…LISL. Residue S206 is the Nucleophile of the active site. H258 functions as the Charge relay system in the catalytic mechanism.

Belongs to the peptidase S54 family.

It is found in the membrane. It catalyses the reaction Cleaves type-1 transmembrane domains using a catalytic dyad composed of serine and histidine that are contributed by different transmembrane domains.. Functionally, probable rhomboid-type serine protease that catalyzes intramembrane proteolysis. This Arabidopsis thaliana (Mouse-ear cress) protein is RHOMBOID-like protein 4.